The sequence spans 424 residues: Vasopressin V1b receptor (424 aa).

A disordered region spans residues Met1–Ala22. The Extracellular portion of the chain corresponds to Met1–Lys35. Polar residues predominate over residues Pro13–Ala22. Residue Asn21 is glycosylated (N-linked (GlcNAc...) asparagine). The chain crosses the membrane as a helical span at residues Val36–Leu59. The Cytoplasmic segment spans residues Gly60 to Leu71. Residues Phe72–Leu93 form a helical membrane-spanning segment. Residues Trp94–Arg108 lie on the Extracellular side of the membrane. A disulfide bond links Cys107 and Cys186. Residues Ala109 to Leu130 form a helical membrane-spanning segment. Over Asp131–Tyr151 the chain is Cytoplasmic. The helical transmembrane segment at Leu152 to Ser173 threads the bilayer. Topologically, residues Leu174–Thr201 are extracellular. A helical transmembrane segment spans residues Trp202–Ile222. Residues Cys223 to Thr283 are Cytoplasmic-facing. The chain crosses the membrane as a helical span at residues Phe284 to Trp303. Over Ser304–Thr321 the chain is Extracellular. A helical membrane pass occupies residues Ile322–Phe341. Over Asn342–Phe424 the chain is Cytoplasmic. Residues Ser398 to Gly417 form a disordered region. A compositionally biased stretch (basic and acidic residues) spans Pro401–Glu411.

The protein belongs to the G-protein coupled receptor 1 family. Vasopressin/oxytocin receptor subfamily.

It localises to the cell membrane. In terms of biological role, receptor for arginine vasopressin. The activity of this receptor is mediated by G proteins which activate a phosphatidyl-inositol-calcium second messenger system. (Microbial infection) During SARS coronavirus-2/SARS-CoV-2 infection, may recognize and internalize the complex formed by AVP/Arg-vasopressin, SARS-CoV-2 spike protein and secreted ACE2 through DNM2/dynamin 2-dependent endocytosis. This is Vasopressin V1b receptor from Homo sapiens (Human).